Reading from the N-terminus, the 616-residue chain is UvrABC system protein C (616 aa).

The GIY-YIG domain maps to 21 to 99 (HQPGVYRMYD…IKLYLPKYNV (79 aa)). Residues 209 to 244 (RQVIASLVEKMEQASQSLNFEQAATFRDQIQALRRV) form the UVR domain.

The protein belongs to the UvrC family. As to quaternary structure, interacts with UvrB in an incision complex.

It localises to the cytoplasm. In terms of biological role, the UvrABC repair system catalyzes the recognition and processing of DNA lesions. UvrC both incises the 5' and 3' sides of the lesion. The N-terminal half is responsible for the 3' incision and the C-terminal half is responsible for the 5' incision. This chain is UvrABC system protein C, found in Photobacterium profundum (strain SS9).